A 228-amino-acid polypeptide reads, in one-letter code: Ribonuclease 3 (228 aa).

Residues 3–132 form the RNase III domain; it reads IRPLEEHLGI…FLGALYLDQG (130 aa). Glu45 provides a ligand contact to Mg(2+). The active site involves Asp49. Residues Asp118 and Glu121 each coordinate Mg(2+). Residue Glu121 is part of the active site. Residues 158 to 227 form the DRBM domain; it reads DYKSQLQEFV…AKNALDSINN (70 aa). A disordered region spans residues 205-228; it reads GTGRTKKEAEQRAAKNALDSINNS.

Belongs to the ribonuclease III family. As to quaternary structure, homodimer. Mg(2+) serves as cofactor.

Its subcellular location is the cytoplasm. The catalysed reaction is Endonucleolytic cleavage to 5'-phosphomonoester.. Its function is as follows. Digests double-stranded RNA. Involved in the processing of primary rRNA transcript to yield the immediate precursors to the large and small rRNAs (23S and 16S). Processes some mRNAs, and tRNAs when they are encoded in the rRNA operon. Processes pre-crRNA and tracrRNA of type II CRISPR loci if present in the organism. The sequence is that of Ribonuclease 3 from Oceanobacillus iheyensis (strain DSM 14371 / CIP 107618 / JCM 11309 / KCTC 3954 / HTE831).